A 669-amino-acid chain; its full sequence is DNA ligase (669 aa).

NAD(+)-binding positions include 32–36 (DAEYD), 81–82 (SL), and E113. The active-site N6-AMP-lysine intermediate is K115. NAD(+)-binding residues include R136, E173, K290, and K314. The Zn(2+) site is built by C408, C411, C426, and C432. The BRCT domain maps to 592–669 (AVDSALAGKI…DEQALIEFLK (78 aa)).

Belongs to the NAD-dependent DNA ligase family. LigA subfamily. The cofactor is Mg(2+). Requires Mn(2+) as cofactor.

It catalyses the reaction NAD(+) + (deoxyribonucleotide)n-3'-hydroxyl + 5'-phospho-(deoxyribonucleotide)m = (deoxyribonucleotide)n+m + AMP + beta-nicotinamide D-nucleotide.. Functionally, DNA ligase that catalyzes the formation of phosphodiester linkages between 5'-phosphoryl and 3'-hydroxyl groups in double-stranded DNA using NAD as a coenzyme and as the energy source for the reaction. It is essential for DNA replication and repair of damaged DNA. This chain is DNA ligase, found in Vibrio cholerae serotype O1 (strain ATCC 39315 / El Tor Inaba N16961).